Consider the following 331-residue polypeptide: 6-phosphogluconolactonase (331 aa).

It belongs to the cycloisomerase 2 family.

It catalyses the reaction 6-phospho-D-glucono-1,5-lactone + H2O = 6-phospho-D-gluconate + H(+). The protein operates within carbohydrate degradation; pentose phosphate pathway; D-ribulose 5-phosphate from D-glucose 6-phosphate (oxidative stage): step 2/3. Catalyzes the hydrolysis of 6-phosphogluconolactone to 6-phosphogluconate. The protein is 6-phosphogluconolactonase of Salmonella paratyphi A (strain ATCC 9150 / SARB42).